Consider the following 857-residue polypeptide: Linoleate 9S-lipoxygenase 6 (857 aa).

Residues 26–156 enclose the PLAT domain; that stretch reads NALDFTDLAG…RYKSDRIFFA (131 aa). Residues 159 to 857 form the Lipoxygenase domain; the sequence is PYLPSETPEL…GKGIPNSVSI (699 aa). Residues 205 to 243 form a disordered region; sequence NPDQGEQNVRTTLGGSADYPYPRRGRTGRPPTRTDPKSE. Over residues 208 to 218 the composition is skewed to polar residues; that stretch reads QGEQNVRTTLG. Residues His518, His523, His709, Asn713, and Ile857 each contribute to the Fe cation site.

This sequence belongs to the lipoxygenase family. In terms of assembly, monomer. The cofactor is Fe cation. Expressed in tubers and roots. Detected in leaves, petioles and stems.

The protein localises to the cytoplasm. It catalyses the reaction (9Z,12Z)-octadecadienoate + O2 = (9S)-hydroperoxy-(10E,12Z)-octadecadienoate. It participates in lipid metabolism; oxylipin biosynthesis. Plant lipoxygenases may be involved in a number of diverse aspects of plant physiology including growth and development, pest resistance, and senescence or responses to wounding. Catalyzes the hydroperoxidation of lipids containing a cis,cis-1,4-pentadiene structure. Linoleic and linolenic acids are the preferred substrates, but is also active with arachidonic acid. The products are almost exclusively the S enantiomers. The polypeptide is Linoleate 9S-lipoxygenase 6 (LOX1.6) (Solanum tuberosum (Potato)).